The chain runs to 187 residues: ECF RNA polymerase sigma factor SigK (187 aa).

A sigma-70 factor domain-2 region spans residues 30-96 (YDHTKSRVYG…RAVDRVRCEQ (67 aa)). The short motif at 53–56 (ETTQ) is the Interaction with polymerase core subunit RpoC element. Positions 133–182 (CLKALTDTQRQCIELAYYGGLTYVEVSRRLAANLSTIKSRMRDALRSLRN) are sigma-70 factor domain-4. Residues 155 to 174 (YVEVSRRLAANLSTIKSRMR) constitute a DNA-binding region (H-T-H motif).

It belongs to the sigma-70 factor family. ECF subfamily. In terms of assembly, interacts transiently with the RNA polymerase catalytic core formed by RpoA, RpoB, RpoC and RpoZ (2 alpha, 1 beta, 1 beta' and 1 omega subunit) to form the RNA polymerase holoenzyme that can initiate transcription. Interacts (via sigma-70 factor domain 4) with anti-sigma-K factor RskA.

Sigma factors are initiation factors that promote the attachment of RNA polymerase to specific initiation sites and are then released. Extracytoplasmic function (ECF) sigma factors are held in an inactive form by an anti-sigma factor until released by regulated intramembrane proteolysis. This Mycobacterium tuberculosis (strain ATCC 25177 / H37Ra) protein is ECF RNA polymerase sigma factor SigK (sigK).